The primary structure comprises 365 residues: Flagellar P-ring protein (365 aa).

The signal sequence occupies residues 1–19; that stretch reads MIKFLSALILLLVTTAAQA.

Belongs to the FlgI family. As to quaternary structure, the basal body constitutes a major portion of the flagellar organelle and consists of four rings (L,P,S, and M) mounted on a central rod.

The protein resides in the periplasm. The protein localises to the bacterial flagellum basal body. In terms of biological role, assembles around the rod to form the L-ring and probably protects the motor/basal body from shearing forces during rotation. In Escherichia coli O157:H7, this protein is Flagellar P-ring protein (flgI).